We begin with the raw amino-acid sequence, 216 residues long: Cytochrome c biogenesis ATP-binding export protein CcmA (216 aa).

Positions 11-216 constitute an ABC transporter domain; sequence LSANELTCIR…RKITLDYRFV (206 aa). 43–50 contacts ATP; the sequence is GPNGAGKT.

The protein belongs to the ABC transporter superfamily. CcmA exporter (TC 3.A.1.107) family. The complex is composed of two ATP-binding proteins (CcmA) and two transmembrane proteins (CcmB).

It localises to the cell inner membrane. It catalyses the reaction heme b(in) + ATP + H2O = heme b(out) + ADP + phosphate + H(+). Functionally, part of the ABC transporter complex CcmAB involved in the biogenesis of c-type cytochromes; once thought to export heme, this seems not to be the case, but its exact role is uncertain. Responsible for energy coupling to the transport system. This Shewanella frigidimarina (strain NCIMB 400) protein is Cytochrome c biogenesis ATP-binding export protein CcmA.